The following is a 407-amino-acid chain: Phosphopentomutase (407 aa).

Mn(2+)-binding residues include Asp-10, Asp-306, His-311, Asp-347, His-348, and His-359.

The protein belongs to the phosphopentomutase family. It depends on Mn(2+) as a cofactor.

The protein localises to the cytoplasm. The catalysed reaction is 2-deoxy-alpha-D-ribose 1-phosphate = 2-deoxy-D-ribose 5-phosphate. It catalyses the reaction alpha-D-ribose 1-phosphate = D-ribose 5-phosphate. The protein operates within carbohydrate degradation; 2-deoxy-D-ribose 1-phosphate degradation; D-glyceraldehyde 3-phosphate and acetaldehyde from 2-deoxy-alpha-D-ribose 1-phosphate: step 1/2. Functionally, isomerase that catalyzes the conversion of deoxy-ribose 1-phosphate (dRib-1-P) and ribose 1-phosphate (Rib-1-P) to deoxy-ribose 5-phosphate (dRib-5-P) and ribose 5-phosphate (Rib-5-P), respectively. This is Phosphopentomutase from Yersinia enterocolitica serotype O:8 / biotype 1B (strain NCTC 13174 / 8081).